A 761-amino-acid chain; its full sequence is 5-methyltetrahydropteroyltriglutamate--homocysteine methyltransferase (761 aa).

5-methyltetrahydropteroyltri-L-glutamate is bound by residues 16 to 19 and K118; that span reads RELK. L-homocysteine-binding positions include 436–438 and E489; that span reads IGS. L-methionine is bound by residues 436–438 and E489; that span reads IGS. Residues 520-521 and W566 each bind 5-methyltetrahydropteroyltri-L-glutamate; that span reads RC. Residue D604 coordinates L-homocysteine. D604 contacts L-methionine. E610 serves as a coordination point for 5-methyltetrahydropteroyltri-L-glutamate. Residues H646, C648, and E670 each coordinate Zn(2+). H699 functions as the Proton donor in the catalytic mechanism. C731 is a Zn(2+) binding site.

It belongs to the vitamin-B12 independent methionine synthase family. It depends on Zn(2+) as a cofactor.

It carries out the reaction 5-methyltetrahydropteroyltri-L-glutamate + L-homocysteine = tetrahydropteroyltri-L-glutamate + L-methionine. Its pathway is amino-acid biosynthesis; L-methionine biosynthesis via de novo pathway; L-methionine from L-homocysteine (MetE route): step 1/1. Functionally, catalyzes the transfer of a methyl group from 5-methyltetrahydrofolate to homocysteine resulting in methionine formation. This chain is 5-methyltetrahydropteroyltriglutamate--homocysteine methyltransferase, found in Vibrio cholerae serotype O1 (strain ATCC 39315 / El Tor Inaba N16961).